The following is a 265-amino-acid chain: Hydroxyethylthiazole kinase 2 (265 aa).

Position 39 (methionine 39) interacts with substrate. Positions 115 and 168 each coordinate ATP. Glycine 195 serves as a coordination point for substrate.

Belongs to the Thz kinase family. Mg(2+) is required as a cofactor.

The enzyme catalyses 5-(2-hydroxyethyl)-4-methylthiazole + ATP = 4-methyl-5-(2-phosphooxyethyl)-thiazole + ADP + H(+). The protein operates within cofactor biosynthesis; thiamine diphosphate biosynthesis; 4-methyl-5-(2-phosphoethyl)-thiazole from 5-(2-hydroxyethyl)-4-methylthiazole: step 1/1. In terms of biological role, catalyzes the phosphorylation of the hydroxyl group of 4-methyl-5-beta-hydroxyethylthiazole (THZ). The chain is Hydroxyethylthiazole kinase 2 from Clostridium botulinum (strain Okra / Type B1).